Consider the following 102-residue polypeptide: Cysteine-rich venom protein VAR9 (102 aa).

The first 19 residues, 1 to 19 (MILLKLYLTLAAILCQSRG), serve as a signal peptide directing secretion. One can recognise an SCP domain in the interval 41–80 (NKHNDLRRTVDPPAKNMLKMSWDNIIAESAKRAALRCNYK).

The protein belongs to the CRISP family. Contains 8 disulfide bonds. As to expression, expressed by the venom gland.

It is found in the secreted. Blocks ryanodine receptors, and potassium channels. The sequence is that of Cysteine-rich venom protein VAR9 from Varanus varius (Lace monitor lizard).